The following is a 352-amino-acid chain: S-adenosylmethionine:tRNA ribosyltransferase-isomerase (352 aa).

The protein belongs to the QueA family. As to quaternary structure, monomer.

It localises to the cytoplasm. It catalyses the reaction 7-aminomethyl-7-carbaguanosine(34) in tRNA + S-adenosyl-L-methionine = epoxyqueuosine(34) in tRNA + adenine + L-methionine + 2 H(+). It participates in tRNA modification; tRNA-queuosine biosynthesis. Its function is as follows. Transfers and isomerizes the ribose moiety from AdoMet to the 7-aminomethyl group of 7-deazaguanine (preQ1-tRNA) to give epoxyqueuosine (oQ-tRNA). This is S-adenosylmethionine:tRNA ribosyltransferase-isomerase from Bacteroides fragilis (strain ATCC 25285 / DSM 2151 / CCUG 4856 / JCM 11019 / LMG 10263 / NCTC 9343 / Onslow / VPI 2553 / EN-2).